The primary structure comprises 736 residues: MSENGKCPVTGKTSKPVAGGGTSNQDWWPNQLNLNILHQQSSKSNPMGGDFNYAEEFKKLDLKAVKEDLYTLMTDSQEWWPADYGHYGPLFIRMAWHSAGTYRMGDGRGGAGSGSQRLAPLNSWPDNVNLDKARRLLWPIKQKYGKRISWADLMVLAGNCAIESMGLPTFGFAGGREDVWEPEQDVYWGSEEEWLATSDKPKSRYSGERDLENPLAAVQMGLIYVNPEGPDGNPDPIASGKDVRETFARMAMNDEETVALVAGGHTFGKCHGAGDAALVGPEPEAAPLEEMGLGWKSSHGRGKGGDTISSGIEGAWKPRPTTWDMGYLKVLFKYDWELVKSPAGANQWLAKDVDDEDMVVDAHDPDKKHRPMMTTADLSLKFDPIYEPIARRYLENPEEFADAFARAWFKLTHRDMGPRARYLGPEVPEEDLIWQDPIPAVDHELIDDKDIADLKAKILASGLSVSQLVTTAWASASTFRGSDNRGGANGARIRFAPQKDWAVNQPAELQKVLQALEGIQKDFNAGQSGGKKVSLADLIVLGGCAGVEKAAQNAGADAAVPFAPGRMDALEEQTDGDSFSVLEPKADGFRNFQKAKFAVKAEELLVDRAQLLTLTAPEMTVLVGGLRMLGANYGNSKHGVFTDKSETLTNDFFVNLLDMGTVWKPSANDEDVFEGSDRKTGALKWTGTRVDLVFGSNSQLRAIAEVYGCEDGQEKFVQDFVAAWDKVMSLDRFDLA.

Residues 1-25 are disordered; sequence MSENGKCPVTGKTSKPVAGGGTSNQ. A cross-link (tryptophyl-tyrosyl-methioninium (Trp-Tyr) (with M-250)) is located at residues 96–224; sequence WHSAGTYRMG…LAAVQMGLIY (129 aa). The active-site Proton acceptor is the His97. Positions 224 to 250 form a cross-link, tryptophyl-tyrosyl-methioninium (Tyr-Met) (with W-96); sequence YVNPEGPDGNPDPIASGKDVRETFARM. His265 contacts heme b. A disordered region spans residues 294–313; that stretch reads GWKSSHGRGKGGDTISSGIE.

Belongs to the peroxidase family. Peroxidase/catalase subfamily. As to quaternary structure, homodimer or homotetramer. The cofactor is heme b. In terms of processing, formation of the three residue Trp-Tyr-Met cross-link is important for the catalase, but not the peroxidase activity of the enzyme.

The catalysed reaction is H2O2 + AH2 = A + 2 H2O. The enzyme catalyses 2 H2O2 = O2 + 2 H2O. Functionally, bifunctional enzyme with both catalase and broad-spectrum peroxidase activity. The chain is Catalase-peroxidase from Desulfatibacillum aliphaticivorans.